The chain runs to 240 residues: Large ribosomal subunit protein uL2 (240 aa).

Positions 1–11 are enriched in polar residues; that stretch reads MGKRLISQNRG. Disordered stretches follow at residues 1–31 and 206–240; these read MGKR…VKYR and GGGR…TGRK. Basic residues-rich tracts occupy residues 13-28 and 224-240; these read GTPK…KGAV and SPGR…TGRK.

It belongs to the universal ribosomal protein uL2 family. As to quaternary structure, part of the 50S ribosomal subunit. Forms a bridge to the 30S subunit in the 70S ribosome.

Its function is as follows. One of the primary rRNA binding proteins. Required for association of the 30S and 50S subunits to form the 70S ribosome, for tRNA binding and peptide bond formation. It has been suggested to have peptidyltransferase activity; this is somewhat controversial. Makes several contacts with the 16S rRNA in the 70S ribosome. The protein is Large ribosomal subunit protein uL2 of Methanococcus maripaludis (strain C6 / ATCC BAA-1332).